The sequence spans 474 residues: 3-isopropylmalate dehydratase large subunit (474 aa).

[4Fe-4S] cluster contacts are provided by cysteine 350, cysteine 415, and cysteine 418.

Belongs to the aconitase/IPM isomerase family. LeuC type 1 subfamily. Heterodimer of LeuC and LeuD. [4Fe-4S] cluster is required as a cofactor.

The enzyme catalyses (2R,3S)-3-isopropylmalate = (2S)-2-isopropylmalate. It participates in amino-acid biosynthesis; L-leucine biosynthesis; L-leucine from 3-methyl-2-oxobutanoate: step 2/4. In terms of biological role, catalyzes the isomerization between 2-isopropylmalate and 3-isopropylmalate, via the formation of 2-isopropylmaleate. This Phenylobacterium zucineum (strain HLK1) protein is 3-isopropylmalate dehydratase large subunit.